The following is a 653-amino-acid chain: Eukaryotic translation initiation factor 4E-binding protein Mextli (653 aa).

Residues 227 to 292 enclose the KH domain; sequence YCKDEVVIRN…DKINYAKQLM (66 aa). 2 disordered regions span residues 311-335 and 515-570; these read VGGSCSSLNSSNSDDAIVQPRTPTG and EGDD…AGTN. Low complexity-rich tracts occupy residues 314–323 and 525–536; these read SCSSLNSSNS and SNGGSSTSNQNG. Residues 546-563 are compositionally biased toward basic and acidic residues; it reads SRKESTPETKGAREKGDL.

As to quaternary structure, interacts with eukaryotic translation initiation factor eIF4E1. Also interacts with eukaryotic translation initiation factor 3 complex members eif3-S9/eif3b, Int6/eif3e and eIF-3p40/eif3h and with CG3225.

It is found in the cytoplasm. The protein localises to the cytoplasmic ribonucleoprotein granule. Its function is as follows. Plays a role in promoting translation. This Drosophila melanogaster (Fruit fly) protein is Eukaryotic translation initiation factor 4E-binding protein Mextli.